The chain runs to 463 residues: Retinoic acid receptor RXR-gamma (463 aa).

The modulating stretch occupies residues 1 to 138 (MYGNYSHFMK…TSPGSLVKHI (138 aa)). The disordered stretch occupies residues 18–53 (SPGHTGSTSMSPSAALSTGKPMDSHPSYTDTPVSAP). Over residues 21–33 (HTGSTSMSPSAAL) the composition is skewed to polar residues. NR C4-type zinc fingers lie at residues 139–159 (CAIC…CEGC) and 175–194 (CRDN…CQYC). Residues 139 to 204 (CAICGDRSSG…RYQKCLVMGM (66 aa)) constitute a DNA-binding region (nuclear receptor). The tract at residues 205 to 230 (KREAVQEERQRSRERAESEAECASSG) is hinge. Residues 211 to 222 (EERQRSRERAES) show a composition bias toward basic and acidic residues. The interval 211-232 (EERQRSRERAESEAECASSGHE) is disordered. An NR LBD domain is found at 231 to 459 (HEDMPVERIL…TFLMEMLETP (229 aa)).

It belongs to the nuclear hormone receptor family. NR2 subfamily. Homodimer. Heterodimer with a RAR molecule. Binds DNA preferentially as a RAR/RXR heterodimer. Interacts with RARA. Acetylated by EP300.

The protein localises to the nucleus. The protein resides in the cytoplasm. Its function is as follows. Receptor for retinoic acid. Retinoic acid receptors bind as heterodimers to their target response elements in response to their ligands, all-trans or 9-cis retinoic acid, and regulate gene expression in various biological processes. The RAR/RXR heterodimers bind to the retinoic acid response elements (RARE) composed of tandem 5'-AGGTCA-3' sites known as DR1-DR5. The high affinity ligand for RXRs is 9-cis retinoic acid. In Pongo abelii (Sumatran orangutan), this protein is Retinoic acid receptor RXR-gamma (RXRG).